Here is a 145-residue protein sequence, read N- to C-terminus: MAKKLTATVELMLPAGQATPAPPVGPALGQHGINIMEFVKQFNAASKDMEPGTIVPVVISIYADRSFTFIMKTPPTSFLLKKAAKVQKGSSDPKRQKAGKITLNQLKEIAQLKAKDMNTQDLDAVMRTIAGTARSMGIEIEGYKG.

The protein belongs to the universal ribosomal protein uL11 family. As to quaternary structure, part of the ribosomal stalk of the 50S ribosomal subunit. Interacts with L10 and the large rRNA to form the base of the stalk. L10 forms an elongated spine to which L12 dimers bind in a sequential fashion forming a multimeric L10(L12)X complex. Post-translationally, one or more lysine residues are methylated.

Functionally, forms part of the ribosomal stalk which helps the ribosome interact with GTP-bound translation factors. This Hydrogenobaculum sp. (strain Y04AAS1) protein is Large ribosomal subunit protein uL11.